The sequence spans 320 residues: Lipoyl synthase (320 aa).

[4Fe-4S] cluster-binding residues include Cys67, Cys72, Cys78, Cys93, Cys97, Cys100, and Ser307. The 218-residue stretch at 79 to 296 (FNHGTATFMI…RTKAEVMGFE (218 aa)) folds into the Radical SAM core domain.

This sequence belongs to the radical SAM superfamily. Lipoyl synthase family. It depends on [4Fe-4S] cluster as a cofactor.

Its subcellular location is the cytoplasm. It carries out the reaction [[Fe-S] cluster scaffold protein carrying a second [4Fe-4S](2+) cluster] + N(6)-octanoyl-L-lysyl-[protein] + 2 oxidized [2Fe-2S]-[ferredoxin] + 2 S-adenosyl-L-methionine + 4 H(+) = [[Fe-S] cluster scaffold protein] + N(6)-[(R)-dihydrolipoyl]-L-lysyl-[protein] + 4 Fe(3+) + 2 hydrogen sulfide + 2 5'-deoxyadenosine + 2 L-methionine + 2 reduced [2Fe-2S]-[ferredoxin]. Its pathway is protein modification; protein lipoylation via endogenous pathway; protein N(6)-(lipoyl)lysine from octanoyl-[acyl-carrier-protein]: step 2/2. In terms of biological role, catalyzes the radical-mediated insertion of two sulfur atoms into the C-6 and C-8 positions of the octanoyl moiety bound to the lipoyl domains of lipoate-dependent enzymes, thereby converting the octanoylated domains into lipoylated derivatives. In Mannheimia succiniciproducens (strain KCTC 0769BP / MBEL55E), this protein is Lipoyl synthase.